We begin with the raw amino-acid sequence, 935 residues long: Progesterone receptor (935 aa).

The disordered stretch occupies residues 1 to 50 (MTELKAKGPRAPHVAGSPSSPKVGSPLPCSQAAGPFPGSQTSDTLPEASA). An AF3; mediates transcriptional activation region spans residues 1 to 164 (MTELKAKGPR…PATQRVLSPL (164 aa)). The tract at residues 1 to 568 (MTELKAKGPR…YSFESLPQKI (568 aa)) is modulating, Pro-Rich. Phosphoserine is present on serine 20. Residues 55–59 (LDGLL) carry the LXXL motif 1 motif. Residues 62–159 (RICQGQDPTD…DPPAAPATQR (98 aa)) form a disordered region. Position 81 is a phosphoserine (serine 81). The LXXL motif 2 signature appears at 115–119 (LDTLW). Residues serine 130 and serine 162 each carry the phosphoserine modification. Positions 165–305 (MSRSGGKAGD…LATTVTDFIH (141 aa)) are mediates transcriptional transrepression. Positions 183–187 (KVLPR) match the Nuclear localization signal motif. The interval 185-252 (LPRGLSPSRQ…ALGGAAAGGG (68 aa)) is disordered. Residue serine 190 is modified to Phosphoserine. Residues 191–203 (PSRQLLLPTSGSP) show a composition bias toward polar residues. Serine 213 is modified (phosphoserine). Over residues 220–231 (EVEEEDGSESED) the composition is skewed to acidic residues. Residues 232–246 (SAGPLLKGKPRALGG) are compositionally biased toward low complexity. Serine 294 is subject to Phosphoserine; by MAPK1. Residues 331–365 (GGAGAASAFAPPRSSPSASSTPVPGGDFPDCAYAP) form a disordered region. Residues 335-356 (AASAFAPPRSSPSASSTPVPGG) are compositionally biased toward low complexity. A Phosphoserine; by MAPK modification is found at serine 345. Residue lysine 388 forms a Glycyl lysine isopeptide (Lys-Gly) (interchain with G-Cter in SUMO); alternate linkage. Residue lysine 388 forms a Glycyl lysine isopeptide (Lys-Gly) (interchain with G-Cter in ubiquitin); alternate linkage. Serine 400 carries the phosphoserine; by CDK2 modification. Residues 415–452 (PDFPLGPPPSLPPRAPPPRPGEAAVTAAPASASVSSAS) are disordered. Positions 418–434 (PLGPPPSLPPRAPPPRP) are enriched in pro residues. Positions 435–452 (GEAAVTAAPASASVSSAS) are enriched in low complexity. The segment at 456–548 (STLECILYKA…VYPPYLNYLR (93 aa)) is AF1; mediates transcriptional activation. Residue lysine 533 forms a Glycyl lysine isopeptide (Lys-Gly) (interchain with G-Cter in SUMO) linkage. NR C4-type zinc fingers lie at residues 569-589 (CLICGDEASGCHYGVLTCGSC) and 605-629 (CAGRNDCIVDKIRRKNCPACRLRKC). A DNA-binding region (nuclear receptor) is located at residues 569-641 (CLICGDEASG…AGMVLGGRKF (73 aa)). A Phosphoserine modification is found at serine 678. An NR LBD domain is found at 681-915 (QDIQLIPPLI…EFPEMMSEVI (235 aa)). Positions 689-935 (LINLLLSIEP…MVKPLLFHKK (247 aa)) are AF2; mediates transcriptional activation.

This sequence belongs to the nuclear hormone receptor family. In terms of assembly, interacts with SMARD1 and UNC45A. Interacts with CUEDC2; the interaction promotes ubiquitination, decreases sumoylation, and represses transcriptional activity. Interacts with PIAS3; the interaction promotes sumoylation of PR in a hormone-dependent manner, inhibits DNA-binding, and alters nuclear export. Interacts with SP1; the interaction requires ligand-induced phosphorylation on Ser-344 by ERK1/2-MAPK. Interacts with PRMT2. Interacts with NCOA2 and NCOA1. Interacts with KLF9. Interacts with GTF2B. Phosphorylated on multiple serine sites. Several of these sites are hormone-dependent. Phosphorylation on Ser-294 is highly hormone-dependent and modulates ubiquitination and sumoylation on Lys-388. Phosphorylation on Ser-345 requires induction by hormone. Basal phosphorylation on Ser-81, Ser-162, Ser-190 and Ser-400 is increased in response to progesterone and can be phosphorylated in vitro by the CDK2-A1 complex. Increased levels of phosphorylation on Ser-400 also in the presence of EGF, heregulin, IGF, PMA and FBS. Phosphorylation at this site by CDK2 is ligand-independent, and increases nuclear translocation and transcriptional activity. Phosphorylation at Ser-162 and Ser-294, but not at Ser-190, is impaired during the G(2)/M phase of the cell cycle. Phosphorylation on Ser-345 by ERK1/2 MAPK is required for interaction with SP1. In terms of processing, sumoylation is hormone-dependent and represses transcriptional activity. Sumoylation on all three sites is enhanced by PIAS3. Desumoylated by SENP1. Sumoylation on Lys-388, the main site of sumoylation, is repressed by ubiquitination on the same site, and modulated by phosphorylation at Ser-294. Post-translationally, ubiquitination is hormone-dependent and represses sumoylation on the same site. Promoted by MAPK-mediated phosphorylation on Ser-294. Palmitoylated by ZDHHC7 and ZDHHC21. Palmitoylation is required for plasma membrane targeting and for rapid intracellular signaling via ERK and AKT kinases and cAMP generation.

Its subcellular location is the nucleus. The protein resides in the cytoplasm. The steroid hormones and their receptors are involved in the regulation of eukaryotic gene expression and affect cellular proliferation and differentiation in target tissues. Transcriptional activator of several progesteron-dependent promoters in a variety of cell types. Involved in activation of SRC-dependent MAPK signaling on hormone stimulation. The sequence is that of Progesterone receptor (PGR) from Pithecia irrorata (Gray monk saki).